The chain runs to 432 residues: MKLSNIPQRYVIVFLTFLSTCVCYIERVGFSIAYTVAADAAGINQSSKGTILSTFFVGYACSQVPGGWAAQKIGGRKVLLLSFVLWSSTCFLVPLDPNRVGLLVVARLLVGVAQGFIFPSIHTVLAQWVPPHERSRLVSITTSGMYLGAALGMWLLPALVELRGPESVFLAEALAGVIWSLLWIRYATDPPRSEHPKAAAAGFGGALLPTNVNHHKVTHIPWKKIMLSLPVWAIVVNNFTFHYALYVLMNWLPTYFELGLQISLQGMDSSKMVPYLNMFVFSIVGGFIADYLITKRILSVTRTRKFLNTVGFLIASAALMVLPMFRTENGVILCSSVALGFLALGRAGFAVNHMDIAPRYAGIVMGVSNTAGTLAGIIGVDLTGKLLEASKLVYSDLSHPESWRVVFFIPGLLCIFSSVVFLLFSTGERIFD.

Residues 1-23 (MKLSNIPQRYVIVFLTFLSTCVC) form the signal peptide. 11 helical membrane passes run 50–70 (TILS…GWAA), 78–98 (VLLL…LDPN), 101–121 (GLLV…FPSI), 140–160 (ITTS…PALV), 164–184 (GPES…LLWI), 229–249 (LPVW…YVLM), 273–293 (VPYL…DYLI), 305–325 (KFLN…LPMF), 331–351 (VILC…GFAV), 360–380 (YAGI…IIGV), and 405–425 (VVFF…LLFS).

It belongs to the major facilitator superfamily. Sodium/anion cotransporter (TC 2.A.1.14) family. Ubiquitous.

Its subcellular location is the golgi apparatus membrane. Functionally, inorganic phosphate and probable anion transporter. This Arabidopsis thaliana (Mouse-ear cress) protein is Probable anion transporter 5 (ANTR5).